Here is a 277-residue protein sequence, read N- to C-terminus: Phosphatidylglycerol--prolipoprotein diacylglyceryl transferase (277 aa).

Helical transmembrane passes span 18–38, 51–71, 89–109, and 116–136; these read ISVK…LLLA, IIVD…RIYY, IWHG…TAII, and ISFW…QAIG. Arginine 137 contributes to the a 1,2-diacyl-sn-glycero-3-phospho-(1'-sn-glycerol) binding site. 3 helical membrane-spanning segments follow: residues 177-197, 205-225, and 235-255; these read QPTF…LLII, GELF…IEGM, and FRVS…IIIY.

This sequence belongs to the Lgt family.

It is found in the cell membrane. The catalysed reaction is L-cysteinyl-[prolipoprotein] + a 1,2-diacyl-sn-glycero-3-phospho-(1'-sn-glycerol) = an S-1,2-diacyl-sn-glyceryl-L-cysteinyl-[prolipoprotein] + sn-glycerol 1-phosphate + H(+). It functions in the pathway protein modification; lipoprotein biosynthesis (diacylglyceryl transfer). Its function is as follows. Catalyzes the transfer of the diacylglyceryl group from phosphatidylglycerol to the sulfhydryl group of the N-terminal cysteine of a prolipoprotein, the first step in the formation of mature lipoproteins. The polypeptide is Phosphatidylglycerol--prolipoprotein diacylglyceryl transferase (Listeria monocytogenes serotype 4a (strain HCC23)).